We begin with the raw amino-acid sequence, 281 residues long: Glyoxalase 1 (281 aa).

2 consecutive VOC domains span residues 4–127 and 132–251; these read RALH…IGKA and KVLR…FVGD.

It belongs to the glyoxalase I family. Expressed in the following tissues in both larvae and adults: pharynx, pharyngeal-intestinal valve, intestine, anal sphincter, vulval muscle, seam cells and the nervous system.

Its function is as follows. Thought to act as a glyoxalase. May remove methylglyoxal from mitochondrial proteins. Has roles in reducing oxidative stress and increasing lifespan. The chain is Glyoxalase 1 (glod-4) from Caenorhabditis elegans.